The sequence spans 449 residues: NADH-quinone oxidoreductase subunit H (449 aa).

Helical transmembrane passes span 23–43 (WWVIGLKAVLILVVLLLLTLF), 93–113 (AVYLIAPVIAVIPSFITFSVI), 137–157 (VAVLFVMAIASIGIYGIVLGG), 176–196 (MISYEVAMGLALVAVFLYAGS), 209–229 (LWYGLILVPSFVIYLIAMVGE), 258–280 (ALFFLAEYINMATVSAVATTLFL), 300–320 (YWPLLWFLGKVLFFVFIFIWL), 332–352 (FMAFGWKRLIPVALVWIVAVA), and 368–388 (LLIGIGALAVVFLVLFFIGGA). Residues 427–442 (RSSPIASSMPQPSAAT) show a composition bias toward polar residues. The tract at residues 427 to 449 (RSSPIASSMPQPSAATRSAGEEI) is disordered.

The protein belongs to the complex I subunit 1 family. As to quaternary structure, NDH-1 is composed of 14 different subunits. Subunits NuoA, H, J, K, L, M, N constitute the membrane sector of the complex.

The protein resides in the cell membrane. The catalysed reaction is a quinone + NADH + 5 H(+)(in) = a quinol + NAD(+) + 4 H(+)(out). In terms of biological role, NDH-1 shuttles electrons from NADH, via FMN and iron-sulfur (Fe-S) centers, to quinones in the respiratory chain. The immediate electron acceptor for the enzyme in this species is believed to be ubiquinone. Couples the redox reaction to proton translocation (for every two electrons transferred, four hydrogen ions are translocated across the cytoplasmic membrane), and thus conserves the redox energy in a proton gradient. This subunit may bind ubiquinone. This is NADH-quinone oxidoreductase subunit H from Nocardioides sp. (strain ATCC BAA-499 / JS614).